Consider the following 305-residue polypeptide: MTFPDIVPELKSRMPDLRGRLLANESLAPLTWFRVGGPAQALFTPADEDDLAYFLSHLPEEIPVCCIGVGSNLIVRDRGLPGVVIRLPPRGFGEITIDGDAVHAGAAALDKRVAEAAAAASISGLEFYFGIPGTIGGALRMNAGANGSETRDVLVEARALSRRGERMTFDNFAMAFDYRSSGIDPSVIFTGAMFRGRIAEPQAIRARMNEVQAHRETVQPIREKTGGSTFKNPPGQSAWKLIDAAGMRGHRVGGAQVSDMHCNFLINTGEATARDIETLGESVRERVKRHSGVDLQWEIKRIGLG.

One can recognise an FAD-binding PCMH-type domain in the interval 35 to 214; it reads VGGPAQALFT…RARMNEVQAH (180 aa). Residue Arg179 is part of the active site. Catalysis depends on Ser228, which acts as the Proton donor. Glu298 is a catalytic residue.

This sequence belongs to the MurB family. FAD is required as a cofactor.

It is found in the cytoplasm. The catalysed reaction is UDP-N-acetyl-alpha-D-muramate + NADP(+) = UDP-N-acetyl-3-O-(1-carboxyvinyl)-alpha-D-glucosamine + NADPH + H(+). Its pathway is cell wall biogenesis; peptidoglycan biosynthesis. Its function is as follows. Cell wall formation. In Nitrobacter winogradskyi (strain ATCC 25391 / DSM 10237 / CIP 104748 / NCIMB 11846 / Nb-255), this protein is UDP-N-acetylenolpyruvoylglucosamine reductase.